A 90-amino-acid polypeptide reads, in one-letter code: Putative Fis-like DNA-binding protein (90 aa).

The H-T-H motif DNA-binding region spans 66–85 (QSRAAALLGIHRATLRKKLK).

It belongs to the transcriptional regulatory Fis family.

This Xylella fastidiosa (strain 9a5c) protein is Putative Fis-like DNA-binding protein.